The chain runs to 1476 residues: Membrane-associated guanylate kinase, WW and PDZ domain-containing protein 3 (1476 aa).

A PDZ 1 domain is found at 18–108; the sequence is CAVSWAGPPG…PIRLKTVKPG (91 aa). Residues 18-108 are interaction with ADRB1 and TGFA; it reads CAVSWAGPPG…PIRLKTVKPG (91 aa). A Guanylate kinase-like domain is found at 116 to 290; sequence RHYLSLQFQK…SSMDFRNYMM (175 aa). 123 to 130 is a binding site for ATP; that stretch reads FQKGSIDH. The tract at residues 184-266 is disordered; sequence TYDGNFYGTP…ETREMHSETS (83 aa). Residues 193 to 204 show a composition bias toward pro residues; that stretch reads PKPPAEPSPFQP. Phosphoserine is present on serine 236. Acidic residues predominate over residues 238-247; that stretch reads LPEEEEDEDK. WW domains lie at 296-329 and 342-375; these read EPLPKNWEMAYTDTGMIYFIDHNTKTTTWLDPRL and GELPYGWEKIEDPQYGTYYVDHLNQKTQFENPVE. The PDZ 2 domain occupies 413 to 495; the sequence is RASLKKSTMG…NQYVNLTLCR (83 aa). The segment at 413-495 is interaction with PTEN; it reads RASLKKSTMG…NQYVNLTLCR (83 aa). Residues 551–575 are disordered; sequence LASDRLNGPSESSEQRASLASSGSS. Residues 559–575 are compositionally biased toward polar residues; the sequence is PSESSEQRASLASSGSS. In terms of domain architecture, PDZ 3 spans 581–657; the sequence is TIPLIKGPKG…GADVPLLILR (77 aa). Residue serine 598 is modified to Phosphoserine. Residues 664–691 are disordered; sequence TKTAKTKTDTKENSGSLETINEPIPQPM. At serine 702 the chain carries Phosphoserine. A PDZ 4 domain is found at 729–811; that stretch reads DVFLRKQESG…NGHVLLTVRR (83 aa). Positions 729–811 are interaction with ADGRB1; the sequence is DVFLRKQESG…NGHVLLTVRR (83 aa). The tract at residues 818–844 is disordered; it reads KQPEDESHQAFSQNGSPRLNRAELPTR. Phosphoserine is present on residues serine 833 and serine 916. Residues 852–939 form the PDZ 5 domain; the sequence is DVTLQRKENE…TVTLTVVAEE (88 aa). The segment at 852 to 939 is interaction with LPAR2 and GRIN2B; that stretch reads DVTLQRKENE…TVTLTVVAEE (88 aa). Residues 939 to 966 are disordered; the sequence is EEHHGPPSGTNSARQSPALQHRPMGQAQ. Positions 946–956 are enriched in polar residues; that stretch reads SGTNSARQSPA. In terms of domain architecture, PDZ 6 spans 1022–1104; sequence PVELERGPRG…KVLLLLRPGT (83 aa). 2 disordered regions span residues 1109 to 1151 and 1168 to 1476; these read DHGD…ATED and TVQE…DKQL. Over residues 1114-1123 the composition is skewed to polar residues; that stretch reads DTNSPSSSNV. 2 stretches are compositionally biased toward basic and acidic residues: residues 1193-1211 and 1230-1265; these read SKKDPPRGSGHGEKSRLKG and RHSEEHLEKIPRPLKSDPKEKSRDRSLSPRKGESKG. Residues 1285–1304 show a composition bias toward polar residues; sequence SSSPKKQQKIGGNSLSNTEG. Composition is skewed to basic and acidic residues over residues 1317–1340 and 1350–1361; these read HPRDSTEQLPDGREKSGVSRKDLK and KSPEKKSSKVDE. Serine 1321 carries the phosphoserine modification. A compositionally biased stretch (polar residues) spans 1363–1373; it reads SLPSKKTSSTA. A compositionally biased stretch (basic and acidic residues) spans 1419-1437; sequence ADDHKGRESEVTDRCRERA.

It belongs to the MAGUK family. Interacts with ADRB1, ADGRB1, LPAR2/EDG4, GRIN2B, PTEN, and PTPRB. Interacts with unidentified tyrosine phosphorylated proteins. Interacts with FZD4, FZD7, TGFA and VANGL2. Interacts with DLL1. Interacts with PRRG4 (via cytoplasmic domain). In terms of tissue distribution, widely expressed. Colocalizes with TGFA in neurons in the cortex and dentate gyrus, as well as in ependymal cells and some astrocytes (at protein level). Present in lens epithelium.

It is found in the cell membrane. The protein resides in the cell junction. It localises to the tight junction. Its subcellular location is the nucleus. In terms of biological role, acts as a scaffolding protein at cell-cell junctions, thereby regulating various cellular and signaling processes. Cooperates with PTEN to modulate the kinase activity of AKT1. Its interaction with PTPRB and tyrosine phosphorylated proteins suggests that it may link receptor tyrosine phosphatase with its substrates at the plasma membrane. In polarized epithelial cells, involved in efficient trafficking of TGFA to the cell surface. Regulates the ability of LPAR2 to activate ERK and RhoA pathways. Regulates the JNK signaling cascade via its interaction with FZD4 and VANGL2. This is Membrane-associated guanylate kinase, WW and PDZ domain-containing protein 3 (Magi3) from Mus musculus (Mouse).